Reading from the N-terminus, the 440-residue chain is MSLLPTATISDIARHNGRVVTLAGWVAHKTEKGKLVFIRLRDGSGVMQCVVFRKNVAEETFIAAQRLTLESSCRITGTVRADERAPGGFELDVNGIEIIQIAPEYPIQPKEHGVEFLMEHRHLWVRSSKQHALLRIRAEIIAAAQEWLNAQGFVRFDTPILTPCAAEGTTNLFATPYFDLGTAYLGQTGQLYVEAGMMSFGKVYCFGPTFRAEKSKTRRHLTEFWMIEPEVAFALHDDNLALQEQFVSAIVQRVLERRADDLATLERDTKPLERCVPPFPRITYDEALRLIAERYAEVEGCTPLEWGEDLGAPHETLIASMFDRPVFVERFPSAIKAFYMEPDPNRPEVALCADLLAPEGYGEIIGGSQRIHDAALLERRIREYGLNVDDYRWYIDLRRYGSVPHSGFGMGIERATAWIGGTHHIRETIPFPRMLYRMYP.

Belongs to the class-II aminoacyl-tRNA synthetase family. In terms of assembly, homodimer.

Its subcellular location is the cytoplasm. It catalyses the reaction tRNA(Asn) + L-asparagine + ATP = L-asparaginyl-tRNA(Asn) + AMP + diphosphate + H(+). This chain is Asparagine--tRNA ligase, found in Roseiflexus castenholzii (strain DSM 13941 / HLO8).